An 82-amino-acid polypeptide reads, in one-letter code: Large ribosomal subunit protein bL31B (82 aa).

Belongs to the bacterial ribosomal protein bL31 family. Type B subfamily. As to quaternary structure, part of the 50S ribosomal subunit.

In Pectobacterium atrosepticum (strain SCRI 1043 / ATCC BAA-672) (Erwinia carotovora subsp. atroseptica), this protein is Large ribosomal subunit protein bL31B.